The following is a 99-amino-acid chain: Protein S100-A11 (99 aa).

The residue at position 1 (methionine 1) is an N-acetylmethionine. Threonine 8 is modified (phosphothreonine). 2 consecutive EF-hand domains span residues arginine 10–alanine 47 and lysine 53–alanine 88. Ca(2+)-binding residues include asparagine 29, lysine 31, glutamate 36, aspartate 66, aspartate 68, aspartate 70, glutamine 72, and glutamate 77.

It belongs to the S-100 family. Homodimer; disulfide-linked. Post-translationally, phosphorylation at Thr-8 significantly suppresses homodimerization and promotes association with NCL/nucleolin which induces nuclear translocation.

The protein localises to the cytoplasm. It localises to the nucleus. Facilitates the differentiation and the cornification of keratinocytes. This chain is Protein S100-A11 (S100A11), found in Sus scrofa (Pig).